The chain runs to 389 residues: tRNA pseudouridine synthase Pus10 (389 aa).

Catalysis depends on Asp-213, which acts as the Nucleophile. Substrate-binding residues include Tyr-278 and Tyr-350.

It belongs to the pseudouridine synthase Pus10 family.

The catalysed reaction is uridine(54) in tRNA = pseudouridine(54) in tRNA. The enzyme catalyses uridine(55) in tRNA = pseudouridine(55) in tRNA. In terms of biological role, responsible for synthesis of pseudouridine from uracil-54 and uracil-55 in the psi GC loop of transfer RNAs. The chain is tRNA pseudouridine synthase Pus10 from Thermoplasma acidophilum (strain ATCC 25905 / DSM 1728 / JCM 9062 / NBRC 15155 / AMRC-C165).